Reading from the N-terminus, the 260-residue chain is Large ribosomal subunit protein eL8A (260 aa).

Residues 1-34 (MPSSKKVAPAPLATKSKASTSTKNPLFESTPKNF) form a disordered region.

Belongs to the eukaryotic ribosomal protein eL8 family. As to quaternary structure, component of the large ribosomal subunit. Mature ribosomes consist of a small (40S) and a large (60S) subunit. The 40S subunit contains about 32 different proteins and 1 molecule of RNA (18S). The 60S subunit contains 45 different proteins and 3 molecules of RNA (25S, 5.8S and 5S).

It is found in the cytoplasm. Component of the ribosome, a large ribonucleoprotein complex responsible for the synthesis of proteins in the cell. The small ribosomal subunit (SSU) binds messenger RNAs (mRNAs) and translates the encoded message by selecting cognate aminoacyl-transfer RNA (tRNA) molecules. The large subunit (LSU) contains the ribosomal catalytic site termed the peptidyl transferase center (PTC), which catalyzes the formation of peptide bonds, thereby polymerizing the amino acids delivered by tRNAs into a polypeptide chain. The nascent polypeptides leave the ribosome through a tunnel in the LSU and interact with protein factors that function in enzymatic processing, targeting, and the membrane insertion of nascent chains at the exit of the ribosomal tunnel. The chain is Large ribosomal subunit protein eL8A from Candida albicans (strain SC5314 / ATCC MYA-2876) (Yeast).